A 304-amino-acid polypeptide reads, in one-letter code: GTPase Era (304 aa).

The Era-type G domain maps to 9–177 (HSGFVAIVGR…VTTLSQHMPE (169 aa)). Positions 17–24 (GRPNVGKS) are G1. 17–24 (GRPNVGKS) lines the GTP pocket. The segment at 43-47 (QTTRN) is G2. Positions 64 to 67 (DTPG) are G3. GTP is bound by residues 64–68 (DTPGI) and 127–130 (NKID). The segment at 127–130 (NKID) is G4. The segment at 156–158 (ISA) is G5. Positions 208–285 (TRQEVPHSVA…YLELWVKVSE (78 aa)) constitute a KH type-2 domain.

The protein belongs to the TRAFAC class TrmE-Era-EngA-EngB-Septin-like GTPase superfamily. Era GTPase family. Monomer.

It localises to the cytoplasm. The protein resides in the cell membrane. Functionally, an essential GTPase that binds both GDP and GTP, with rapid nucleotide exchange. Plays a role in 16S rRNA processing and 30S ribosomal subunit biogenesis and possibly also in cell cycle regulation and energy metabolism. The sequence is that of GTPase Era from Pediococcus pentosaceus (strain ATCC 25745 / CCUG 21536 / LMG 10740 / 183-1w).